Reading from the N-terminus, the 460-residue chain is UDP-N-acetylmuramate--L-alanine ligase (460 aa).

116–122 (GSHGKTT) contacts ATP.

It belongs to the MurCDEF family.

The protein resides in the cytoplasm. The enzyme catalyses UDP-N-acetyl-alpha-D-muramate + L-alanine + ATP = UDP-N-acetyl-alpha-D-muramoyl-L-alanine + ADP + phosphate + H(+). The protein operates within cell wall biogenesis; peptidoglycan biosynthesis. In terms of biological role, cell wall formation. This Caldanaerobacter subterraneus subsp. tengcongensis (strain DSM 15242 / JCM 11007 / NBRC 100824 / MB4) (Thermoanaerobacter tengcongensis) protein is UDP-N-acetylmuramate--L-alanine ligase.